Reading from the N-terminus, the 145-residue chain is Lysozyme-like protein 4 (145 aa).

An N-terminal signal peptide occupies residues 1–19 (MQLYLVLLLISYLLTPIGA). The region spanning 20 to 145 (SILGRCVVAK…LDRWLDGCEL (126 aa)) is the C-type lysozyme domain. Intrachain disulfides connect cysteine 25/cysteine 143, cysteine 49/cysteine 130, cysteine 84/cysteine 95, and cysteine 91/cysteine 109. The active site involves glutamate 54.

This sequence belongs to the glycosyl hydrolase 22 family. Monomer. In terms of tissue distribution, expressed in the brain, lung, ovary, uterus and testis. In testis expressed in the germinal epithelium and on the maturing spermatozoa (at protein level).

The protein localises to the secreted. Its subcellular location is the cytoplasmic vesicle. It localises to the secretory vesicle. The protein resides in the acrosome. It is found in the cell projection. The protein localises to the cilium. Its subcellular location is the flagellum. Its function is as follows. May be involved in fertilization. Has no detectable bacteriolytic and lysozyme activities in vitro. This Rattus norvegicus (Rat) protein is Lysozyme-like protein 4 (Lyzl4).